We begin with the raw amino-acid sequence, 709 residues long: Phosphoribosylformylglycinamidine synthase subunit PurL (709 aa).

Residue H36 is part of the active site. Residues Y39 and K80 each contribute to the ATP site. E82 is a binding site for Mg(2+). Substrate-binding positions include S83–H86 and R105. H84 functions as the Proton acceptor in the catalytic mechanism. Mg(2+) is bound at residue D106. Position 226 (Q226) interacts with substrate. D252 is a binding site for Mg(2+). Position 294–296 (E294–Q296) interacts with substrate. ATP is bound by residues D470 and G507. S510 serves as a coordination point for substrate.

Belongs to the FGAMS family. In terms of assembly, monomer. Part of the FGAM synthase complex composed of 1 PurL, 1 PurQ and 2 PurS subunits.

Its subcellular location is the cytoplasm. The catalysed reaction is N(2)-formyl-N(1)-(5-phospho-beta-D-ribosyl)glycinamide + L-glutamine + ATP + H2O = 2-formamido-N(1)-(5-O-phospho-beta-D-ribosyl)acetamidine + L-glutamate + ADP + phosphate + H(+). The protein operates within purine metabolism; IMP biosynthesis via de novo pathway; 5-amino-1-(5-phospho-D-ribosyl)imidazole from N(2)-formyl-N(1)-(5-phospho-D-ribosyl)glycinamide: step 1/2. Its function is as follows. Part of the phosphoribosylformylglycinamidine synthase complex involved in the purines biosynthetic pathway. Catalyzes the ATP-dependent conversion of formylglycinamide ribonucleotide (FGAR) and glutamine to yield formylglycinamidine ribonucleotide (FGAM) and glutamate. The FGAM synthase complex is composed of three subunits. PurQ produces an ammonia molecule by converting glutamine to glutamate. PurL transfers the ammonia molecule to FGAR to form FGAM in an ATP-dependent manner. PurS interacts with PurQ and PurL and is thought to assist in the transfer of the ammonia molecule from PurQ to PurL. The chain is Phosphoribosylformylglycinamidine synthase subunit PurL from Saccharolobus islandicus (strain M.16.27) (Sulfolobus islandicus).